Consider the following 88-residue polypeptide: Small ribosomal subunit protein uS17 (88 aa).

The protein belongs to the universal ribosomal protein uS17 family. As to quaternary structure, part of the 30S ribosomal subunit.

Its function is as follows. One of the primary rRNA binding proteins, it binds specifically to the 5'-end of 16S ribosomal RNA. The protein is Small ribosomal subunit protein uS17 of Pseudomonas aeruginosa (strain LESB58).